The chain runs to 625 residues: tRNA uridine 5-carboxymethylaminomethyl modification enzyme MnmG (625 aa).

FAD-binding positions include 13–18, Val125, and Ser182; that span reads GGGHAG. NAD(+) is bound at residue 276-290; that stretch reads GPRYCPSIEDKITRF. Gln373 is a binding site for FAD.

It belongs to the MnmG family. In terms of assembly, homodimer. Heterotetramer of two MnmE and two MnmG subunits. The cofactor is FAD.

The protein localises to the cytoplasm. In terms of biological role, NAD-binding protein involved in the addition of a carboxymethylaminomethyl (cmnm) group at the wobble position (U34) of certain tRNAs, forming tRNA-cmnm(5)s(2)U34. The chain is tRNA uridine 5-carboxymethylaminomethyl modification enzyme MnmG from Lactococcus lactis subsp. cremoris (strain MG1363).